The primary structure comprises 162 residues: UPF0114 protein VCM66_0196 (162 aa).

4 helical membrane passes run 15–35 (IMAP…IKFF), 53–73 (LILV…IVMV), 109–126 (VSAS…KVFM), and 136–156 (IKWY…MGYL).

Belongs to the UPF0114 family.

The protein localises to the cell membrane. The sequence is that of UPF0114 protein VCM66_0196 from Vibrio cholerae serotype O1 (strain M66-2).